Here is a 241-residue protein sequence, read N- to C-terminus: RxLR effector protein SFI5 (241 aa).

An N-terminal signal peptide occupies residues 1-20; that stretch reads MLRQARPLVVLIAVTFLVAS. Residues 44-62 carry the RxLR-dEER motif; the sequence is RLLRTHHATIKVNADSEER.

Belongs to the RxLR effector family.

Its subcellular location is the secreted. It is found in the host cell membrane. Functionally, effector that suppresses flg22-induced post-translational MAP kinase activation in tomato but not in Arabidopsis. The perception of highly conserved pathogen- or microbe-associated molecular patterns (PAMPs/MAMPs), such as flg22, triggers converging signaling pathways recruiting MAP kinase cascades and inducing transcriptional re-programming, yielding a generic antimicrobial response. In Phytophthora infestans (strain T30-4) (Potato late blight agent), this protein is RxLR effector protein SFI5.